Reading from the N-terminus, the 434-residue chain is Mannose-6-phosphate isomerase (434 aa).

The Zn(2+) site is built by Gln-109, His-111, and Glu-136. The segment covering 181 to 191 (SLGLPTSQPPD) has biased composition (polar residues). Residues 181–200 (SLGLPTSQPPDTSLFKPTES) are disordered. His-291 is a Zn(2+) binding site. Arg-310 is an active-site residue.

Belongs to the mannose-6-phosphate isomerase type 1 family. Requires Zn(2+) as cofactor.

The protein localises to the cytoplasm. The enzyme catalyses D-mannose 6-phosphate = D-fructose 6-phosphate. It participates in nucleotide-sugar biosynthesis; GDP-alpha-D-mannose biosynthesis; alpha-D-mannose 1-phosphate from D-fructose 6-phosphate: step 1/2. Involved in the synthesis of the GDP-mannose and dolichol-phosphate-mannose required for a number of critical mannosyl transfer reactions. The sequence is that of Mannose-6-phosphate isomerase (MAN1) from Cryptococcus neoformans var. neoformans serotype D (strain JEC21 / ATCC MYA-565) (Filobasidiella neoformans).